The chain runs to 323 residues: Ankyrin repeat and SOCS box protein 11 (323 aa).

ANK repeat units follow at residues 64–93, 97–126, 130–159, 162–191, 195–224, and 227–256; these read ADRS…NVNL, NRVS…HVNG, HGAT…KAQL, HLAS…NIDH, QLGT…SVDH, and WLDT…NLKR. In terms of domain architecture, SOCS box spans 273 to 323; that stretch reads SVEQALLLREGPPALSQLCRLCVRKCLGRACHQAIHKLHLPEPLERFLLYQ.

This sequence belongs to the ankyrin SOCS box (ASB) family. As to quaternary structure, substrate-recognition component of the ECS(ASB11) complex, composed of ASB11, CUL5, ELOB, ELOC and RNF7/RBX2.

The protein localises to the endoplasmic reticulum. It participates in protein modification; protein ubiquitination. Its function is as follows. Substrate-recognition component of a cullin-5-RING E3 ubiquitin-protein ligase complex (ECS complex, also named CRL5 complex), which mediates the ubiquitination and subsequent proteasomal degradation of target proteins, such as BIK, DIRAS2 and RPN1. The ECS(ASB11) complex acts as a regulator of the endoplasmic reticulum unfolded protein response by mediating ubiquitination and degradation of BIK. The chain is Ankyrin repeat and SOCS box protein 11 from Homo sapiens (Human).